A 688-amino-acid polypeptide reads, in one-letter code: Methionine--tRNA ligase (688 aa).

A 'HIGH' region motif is present at residues 15 to 25 (PYANGPIHLGH). Zn(2+) is bound by residues C146, C149, C159, and C162. Positions 332 to 336 (KMSKS) match the 'KMSKS' region motif. K335 contributes to the ATP binding site. Positions 552 to 576 (AEAPKKADSKKATDTPVDTRPPLES) are disordered. Over residues 554-564 (APKKADSKKAT) the composition is skewed to basic and acidic residues. The 102-residue stretch at 587-688 (DFAKIDLRIA…EGAQPGMRVK (102 aa)) folds into the tRNA-binding domain.

The protein belongs to the class-I aminoacyl-tRNA synthetase family. MetG type 1 subfamily. As to quaternary structure, homodimer. Zn(2+) serves as cofactor.

It localises to the cytoplasm. It carries out the reaction tRNA(Met) + L-methionine + ATP = L-methionyl-tRNA(Met) + AMP + diphosphate. In terms of biological role, is required not only for elongation of protein synthesis but also for the initiation of all mRNA translation through initiator tRNA(fMet) aminoacylation. The sequence is that of Methionine--tRNA ligase from Shewanella woodyi (strain ATCC 51908 / MS32).